Consider the following 79-residue polypeptide: ATP synthase subunit c (79 aa).

Transmembrane regions (helical) follow at residues 11-31 (IAVAIMIGLAAIGAAIGIGIL) and 53-73 (FFVVMGLVDAIPMIAVGLGLY).

The protein belongs to the ATPase C chain family. F-type ATPases have 2 components, F(1) - the catalytic core - and F(0) - the membrane proton channel. F(1) has five subunits: alpha(3), beta(3), gamma(1), delta(1), epsilon(1). F(0) has three main subunits: a(1), b(2) and c(10-14). The alpha and beta chains form an alternating ring which encloses part of the gamma chain. F(1) is attached to F(0) by a central stalk formed by the gamma and epsilon chains, while a peripheral stalk is formed by the delta and b chains.

Its subcellular location is the cell membrane. In terms of biological role, f(1)F(0) ATP synthase produces ATP from ADP in the presence of a proton or sodium gradient. F-type ATPases consist of two structural domains, F(1) containing the extramembraneous catalytic core and F(0) containing the membrane proton channel, linked together by a central stalk and a peripheral stalk. During catalysis, ATP synthesis in the catalytic domain of F(1) is coupled via a rotary mechanism of the central stalk subunits to proton translocation. Its function is as follows. Key component of the F(0) channel; it plays a direct role in translocation across the membrane. A homomeric c-ring of between 10-14 subunits forms the central stalk rotor element with the F(1) delta and epsilon subunits. The polypeptide is ATP synthase subunit c (Buchnera aphidicola subsp. Schizaphis graminum (strain Sg)).